A 254-amino-acid chain; its full sequence is Sugar fermentation stimulation protein homolog (254 aa).

The protein belongs to the SfsA family.

This chain is Sugar fermentation stimulation protein homolog, found in Synechococcus sp. (strain CC9605).